We begin with the raw amino-acid sequence, 77 residues long: Structural DNA-binding protein p10 (77 aa).

The segment covering 1-12 has biased composition (polar residues); sequence MPTKAGTKSTAN. The disordered stretch occupies residues 1–38; the sequence is MPTKAGTKSTANKKTTKGPSKSGSAKGHTGKTHATALH. Residues 17-27 are compositionally biased toward low complexity; the sequence is KGPSKSGSAKG.

The protein belongs to the asfivirus P10 family.

It localises to the virion. Its function is as follows. May play a role in genome packaging through direct interaction with viral DNA. Binds to ssDNA and dsDNA with the same apparent affinity in vitro. The chain is Structural DNA-binding protein p10 from Ornithodoros (relapsing fever ticks).